The chain runs to 358 residues: 1-deoxy-D-xylulose 5-phosphate reductoisomerase (358 aa).

NADPH is bound by residues threonine 7, glycine 8, serine 9, isoleucine 10, glycine 31, asparagine 33, and asparagine 114. Lysine 115 provides a ligand contact to 1-deoxy-D-xylulose 5-phosphate. Residue glutamate 116 participates in NADPH binding. Aspartate 134 serves as a coordination point for Mn(2+). Residues serine 135, glutamate 136, serine 157, and histidine 180 each contribute to the 1-deoxy-D-xylulose 5-phosphate site. Glutamate 136 is a binding site for Mn(2+). Residue glycine 186 participates in NADPH binding. 1-deoxy-D-xylulose 5-phosphate contacts are provided by serine 193, asparagine 198, lysine 199, and glutamate 202. Position 202 (glutamate 202) interacts with Mn(2+).

It belongs to the DXR family. The cofactor is Mg(2+). Mn(2+) is required as a cofactor.

The enzyme catalyses 2-C-methyl-D-erythritol 4-phosphate + NADP(+) = 1-deoxy-D-xylulose 5-phosphate + NADPH + H(+). The protein operates within isoprenoid biosynthesis; isopentenyl diphosphate biosynthesis via DXP pathway; isopentenyl diphosphate from 1-deoxy-D-xylulose 5-phosphate: step 1/6. Its function is as follows. Catalyzes the NADPH-dependent rearrangement and reduction of 1-deoxy-D-xylulose-5-phosphate (DXP) to 2-C-methyl-D-erythritol 4-phosphate (MEP). This chain is 1-deoxy-D-xylulose 5-phosphate reductoisomerase, found in Wolinella succinogenes (strain ATCC 29543 / DSM 1740 / CCUG 13145 / JCM 31913 / LMG 7466 / NCTC 11488 / FDC 602W) (Vibrio succinogenes).